We begin with the raw amino-acid sequence, 569 residues long: 63 kDa chaperonin, mitochondrial (569 aa).

The transit peptide at 1 to 29 (MFKMYRSPHITRNSFKYLKATNINSCRFY) directs the protein to the mitochondrion.

It belongs to the chaperonin (HSP60) family. As to quaternary structure, forms a single seven-member ring complex, in tight association with the p60 protein. In terms of tissue distribution, testis.

It localises to the mitochondrion. Its function is as follows. Implicated in mitochondrial protein import and macromolecular assembly. May facilitate the correct folding of imported proteins. May also prevent misfolding and promote the refolding and proper assembly of unfolded polypeptides generated under stress conditions in the mitochondrial matrix. This Heliothis virescens (Tobacco budworm moth) protein is 63 kDa chaperonin, mitochondrial.